The following is a 95-amino-acid chain: Co-chaperonin GroES (95 aa).

It belongs to the GroES chaperonin family. Heptamer of 7 subunits arranged in a ring. Interacts with the chaperonin GroEL.

It localises to the cytoplasm. In terms of biological role, together with the chaperonin GroEL, plays an essential role in assisting protein folding. The GroEL-GroES system forms a nano-cage that allows encapsulation of the non-native substrate proteins and provides a physical environment optimized to promote and accelerate protein folding. GroES binds to the apical surface of the GroEL ring, thereby capping the opening of the GroEL channel. This Geobacter metallireducens (strain ATCC 53774 / DSM 7210 / GS-15) protein is Co-chaperonin GroES.